Reading from the N-terminus, the 382-residue chain is UDP-N-acetylglucosamine--N-acetylmuramyl-(pentapeptide) pyrophosphoryl-undecaprenol N-acetylglucosamine transferase (382 aa).

UDP-N-acetyl-alpha-D-glucosamine is bound by residues 11–13, asparagine 124, arginine 165, serine 200, isoleucine 254, and glutamine 299; that span reads TGG.

Belongs to the glycosyltransferase 28 family. MurG subfamily.

Its subcellular location is the cell inner membrane. It catalyses the reaction di-trans,octa-cis-undecaprenyl diphospho-N-acetyl-alpha-D-muramoyl-L-alanyl-D-glutamyl-meso-2,6-diaminopimeloyl-D-alanyl-D-alanine + UDP-N-acetyl-alpha-D-glucosamine = di-trans,octa-cis-undecaprenyl diphospho-[N-acetyl-alpha-D-glucosaminyl-(1-&gt;4)]-N-acetyl-alpha-D-muramoyl-L-alanyl-D-glutamyl-meso-2,6-diaminopimeloyl-D-alanyl-D-alanine + UDP + H(+). It functions in the pathway cell wall biogenesis; peptidoglycan biosynthesis. Its function is as follows. Cell wall formation. Catalyzes the transfer of a GlcNAc subunit on undecaprenyl-pyrophosphoryl-MurNAc-pentapeptide (lipid intermediate I) to form undecaprenyl-pyrophosphoryl-MurNAc-(pentapeptide)GlcNAc (lipid intermediate II). In Nitratidesulfovibrio vulgaris (strain DSM 19637 / Miyazaki F) (Desulfovibrio vulgaris), this protein is UDP-N-acetylglucosamine--N-acetylmuramyl-(pentapeptide) pyrophosphoryl-undecaprenol N-acetylglucosamine transferase.